Reading from the N-terminus, the 545-residue chain is Glucose-6-phosphate isomerase (545 aa).

Glutamate 351 (proton donor) is an active-site residue. Residues histidine 382 and lysine 510 contribute to the active site.

The protein belongs to the GPI family.

It is found in the cytoplasm. The enzyme catalyses alpha-D-glucose 6-phosphate = beta-D-fructose 6-phosphate. The protein operates within carbohydrate biosynthesis; gluconeogenesis. Its pathway is carbohydrate degradation; glycolysis; D-glyceraldehyde 3-phosphate and glycerone phosphate from D-glucose: step 2/4. Its function is as follows. Catalyzes the reversible isomerization of glucose-6-phosphate to fructose-6-phosphate. This Helicobacter pylori (strain Shi470) protein is Glucose-6-phosphate isomerase.